Reading from the N-terminus, the 466-residue chain is Soluble pyridine nucleotide transhydrogenase (466 aa).

Position 36-45 (36-45 (ERYHQVGGGC)) interacts with FAD.

The protein belongs to the class-I pyridine nucleotide-disulfide oxidoreductase family. Requires FAD as cofactor.

The protein localises to the cytoplasm. It catalyses the reaction NAD(+) + NADPH = NADH + NADP(+). Conversion of NADPH, generated by peripheral catabolic pathways, to NADH, which can enter the respiratory chain for energy generation. The chain is Soluble pyridine nucleotide transhydrogenase from Colwellia psychrerythraea (strain 34H / ATCC BAA-681) (Vibrio psychroerythus).